We begin with the raw amino-acid sequence, 196 residues long: UMP-CMP kinase (196 aa).

ATP is bound at residue 13–18 (GAGKGT). The interval 33–63 (SAGDLLRDERKKPDSQYGELIESYIRDGRIV) is NMP. A ribonucleoside 5'-phosphate is bound by residues Arg39, 61 to 63 (RIV), and 93 to 96 (GFPR). Asn100 is a binding site for CMP. Residues 133 to 143 (ERGKSSGRSDD) form an LID region. Arg134 lines the ATP pocket. Residues Arg140 and Arg151 each coordinate a ribonucleoside 5'-phosphate. Lys179 is an ATP binding site.

Belongs to the adenylate kinase family. UMP-CMP kinase subfamily. As to quaternary structure, monomer. Requires Mg(2+) as cofactor.

It is found in the cytoplasm. It localises to the nucleus. It catalyses the reaction CMP + ATP = CDP + ADP. It carries out the reaction dCMP + ATP = dCDP + ADP. The enzyme catalyses UMP + ATP = UDP + ADP. The catalysed reaction is a 2'-deoxyribonucleoside 5'-diphosphate + ATP = a 2'-deoxyribonucleoside 5'-triphosphate + ADP. It catalyses the reaction a ribonucleoside 5'-diphosphate + ATP = a ribonucleoside 5'-triphosphate + ADP. Functionally, catalyzes the phosphorylation of pyrimidine nucleoside monophosphates at the expense of ATP. Plays an important role in de novo pyrimidine nucleotide biosynthesis. Has preference for UMP and CMP as phosphate acceptors. Also displays broad nucleoside diphosphate kinase activity. The chain is UMP-CMP kinase (cmpk1) from Xenopus tropicalis (Western clawed frog).